The sequence spans 338 residues: MRISVLGAGAWGTALASHAAQSHDVVLWGRDAALVAQMAATRANERYLPGIPLHASLRFEAEMSAALDHATGEDALVVIASPVAGLADLTRGVAAHGGVRNVIWLCKGFDPESGALPHAIVAGVLAQTGRADLATGALSGPSFAKEVAQGLPCAMTVASASTALCTRTQRAFHHHAMRVYASDDLVGVEVGGAVKNVLAIATGAADGLGLGLNARAALVTRGLAEMTRLGTALGGRPETFMGLTGMGDLLLTATGDLSRNRTVGMQLAQGRSLDEILAHLGHVAEGVRCARAVAALARAKGVDMPITFAVCEVLFDGLAPSRAVDRLLQRDAKAESVR.

NADPH-binding residues include W11, R30, and K107. Sn-glycerol 3-phosphate is bound by residues K107, G140, and S142. Residue A144 participates in NADPH binding. Sn-glycerol 3-phosphate contacts are provided by K195, D248, S258, R259, and N260. K195 (proton acceptor) is an active-site residue. Residue R259 coordinates NADPH. NADPH-binding residues include V283 and E285.

This sequence belongs to the NAD-dependent glycerol-3-phosphate dehydrogenase family.

It is found in the cytoplasm. The enzyme catalyses sn-glycerol 3-phosphate + NAD(+) = dihydroxyacetone phosphate + NADH + H(+). The catalysed reaction is sn-glycerol 3-phosphate + NADP(+) = dihydroxyacetone phosphate + NADPH + H(+). Its pathway is membrane lipid metabolism; glycerophospholipid metabolism. Its function is as follows. Catalyzes the reduction of the glycolytic intermediate dihydroxyacetone phosphate (DHAP) to sn-glycerol 3-phosphate (G3P), the key precursor for phospholipid synthesis. The polypeptide is Glycerol-3-phosphate dehydrogenase [NAD(P)+] (Ralstonia nicotianae (strain ATCC BAA-1114 / GMI1000) (Ralstonia solanacearum)).